A 220-amino-acid polypeptide reads, in one-letter code: UPF0502 protein CV_4303 (220 aa).

Belongs to the UPF0502 family.

The protein is UPF0502 protein CV_4303 of Chromobacterium violaceum (strain ATCC 12472 / DSM 30191 / JCM 1249 / CCUG 213 / NBRC 12614 / NCIMB 9131 / NCTC 9757 / MK).